Reading from the N-terminus, the 62-residue chain is Delta-theraphotoxin-Cg1a 1 (62 aa).

A signal peptide spans M1–A21. Residues T22 to R29 constitute a propeptide that is removed on maturation. 3 disulfides stabilise this stretch: C31–C46, C38–C51, and C45–C58.

It belongs to the neurotoxin 10 (Hwtx-1) family. 33 (Jztx-1) subfamily. Expressed by the venom gland.

The protein resides in the secreted. In terms of biological role, inhibits voltage-gated sodium channels, preferentially subtype Nav1.5/SCN5A (in cardiac myocytes), but also Nav1.6/SCN8A and Nav1.7/SCN9A (TTX-sensitive Nav in rat DRG neurons) and invertebrate Nav (in insect neurons) as well as voltage-gated potassium channels of the subtype Kv2.1/KCNB1. Is suggested to bind to site 3 of the sodium channels and inhibit the inactivation of the activated channels, thereby blocking neuronal transmission. On potassium channels, inhibits activation of channels with an IC(50) of 8.05 uM through a voltage sensor-trapping mechanism. Increases muscle contraction in several assays (mouse phrenic nerve-diaphragm, toad heart, rat vas deferens) and is suggested to act both presynaptically and postsynaptically. Functionally, moderately inhibits voltage-gated sodium channels and weakly inhibits voltage-gated potassium channel. Inhibits the inactivation of rat Nav1.2/SCN2A (IC(50)=870 nM), rat Nav1.3/SCN3A (IC(50)=845 nM), rat Nav1.4/SCN4A (IC(50)=339 nM), human Nav1.5/SCN5A (IC(50)=335 nM) and human Nav1.7/SCN9A sodium channels (IC(50)=348 nM). The toxin delays the inactivation of sodium channels without affecting the activation and steady-state inactivation kinetics in the physiological range of voltages. Site-directed mutagenesis of the sodium channel indicates that the toxin interacts with site 3 located at the extracellular S3-S4 linker of domain IV. On potassium channels, it inhibits activation of channels with an IC(50) of 8.05 uM through a voltage sensor-trapping mechanism. It increases muscle contraction in several assays (mouse phrenic nerve-diaphragm, toad heart, rat vas deferens) and is suggested to act both presynaptically and postsynaptically. This Chilobrachys guangxiensis (Chinese earth tiger tarantula) protein is Delta-theraphotoxin-Cg1a 1.